The following is a 445-amino-acid chain: MDFLSHAMLSRSESTQILCELSQIDESTMDPQYTEDDVLARLFVFSSSSPQTVLNVKKYEDVSVGRSNTCNYQLLQFTASYKHFRVYSVLIDDDMDPLVYCEDQSSNGTFLNHRLIGKGNSVLLSDGDILDVRHCASFLFQQKYTTDNDFHHEYAGERFNITQRLLGIGGFSRIYMAMDNNTGGQYACKIIDKKKISTKRFFEDHEMTILRKLDHPNIIKVNMEYNSETQFFIFEEMVTGGDLFSYLTKLGTVPEVTTLFIMFQILQGLKYLHEQNIIHRDLKLENILIASSSDTIFRIILTDFGVARCMQKGKRLSTFVGTPEYTAPEIQRLKGRSQVEKENSSGYGKEVDLWSLGVIMFLLLSGNSPSFADGVKEKQVDFRDPVWKSVSRQAKDLISNLLKTNPPDRFTVKQCLSHPWFARHSSRLTKLYETRILKPLKHSRL.

One can recognise an FHA domain in the interval 62–116; that stretch reads VSVGRSNTCNYQLLQFTASYKHFRVYSVLIDDDMDPLVYCEDQSSNGTFLNHRLI. The Protein kinase domain maps to 160 to 421; the sequence is NITQRLLGIG…VKQCLSHPWF (262 aa). Residues 166–174 and K189 each bind ATP; that span reads LGIGGFSRI. D281 acts as the Proton acceptor in catalysis.

The protein belongs to the protein kinase superfamily. CAMK Ser/Thr protein kinase family. CHEK2 subfamily.

It catalyses the reaction L-seryl-[protein] + ATP = O-phospho-L-seryl-[protein] + ADP + H(+). The catalysed reaction is L-threonyl-[protein] + ATP = O-phospho-L-threonyl-[protein] + ADP + H(+). Its function is as follows. Probable protein kinase required for meiotic recombination. This chain is Meiosis-specific serine/threonine-protein kinase mek1 (mek1), found in Schizosaccharomyces pombe (strain 972 / ATCC 24843) (Fission yeast).